A 342-amino-acid chain; its full sequence is MRCLIVCENLEMLNLSLAKTYKDYFKIGAAVTAKDLEGVHRDILLKHFNSLTPENAMKFENIHPEEQRYNFEEVARIKEFAIKNDMKLRGHTFVWHNQTPGWVFLDKNGEEASKELVIERLREHIKTLCERYKDVVYAWDVVNEAVEDKTEKLLRESNWRKIIGDDYIKIAFEIAREYAGDAKLFYNDYNNEMPYKLEKTYKVLKELLERGTPIDGIGIQAHWNIWDKNLVSNLKKAIEVYASLGLEIHITELDISVFEFEDKRTDLFEPTPEMLELQAKVYEDVFAVFREYKDVITSVTLWGISDRHTWKDNFPVKGRKDWPLLFDVNGKPKEALYRILRF.

In terms of domain architecture, GH10 spans 11–342 (EMLNLSLAKT…KEALYRILRF (332 aa)). The active-site Proton donor is Glu-144. Glu-252 serves as the catalytic Nucleophile.

This sequence belongs to the glycosyl hydrolase 10 (cellulase F) family. Cytoplasmic xylanase subfamily.

It is found in the cytoplasm. The catalysed reaction is Endohydrolysis of (1-&gt;4)-beta-D-xylosidic linkages in xylans.. It functions in the pathway glycan degradation; xylan degradation. This Caldicellulosiruptor saccharolyticus (Caldocellum saccharolyticum) protein is Endo-1,4-beta-xylanase A (xynA).